The following is a 350-amino-acid chain: Ketol-acid reductoisomerase (NADP(+)) (350 aa).

Residues 4–187 enclose the KARI N-terminal Rossmann domain; it reads VSITTDYSRM…GGARANIIKT (184 aa). Residues 30–33, arginine 53, threonine 58, and 88–91 each bind NADP(+); these read YGSQ and DMVQ. Histidine 113 is an active-site residue. Glycine 139 lines the NADP(+) pocket. A KARI C-terminal knotted domain is found at 188-333; sequence TFKEETETDL…KQLRAKMVWL (146 aa). Residues aspartate 196, glutamate 200, glutamate 232, and glutamate 236 each contribute to the Mg(2+) site. Position 257 (serine 257) interacts with substrate.

The protein belongs to the ketol-acid reductoisomerase family. Requires Mg(2+) as cofactor.

It carries out the reaction (2R)-2,3-dihydroxy-3-methylbutanoate + NADP(+) = (2S)-2-acetolactate + NADPH + H(+). It catalyses the reaction (2R,3R)-2,3-dihydroxy-3-methylpentanoate + NADP(+) = (S)-2-ethyl-2-hydroxy-3-oxobutanoate + NADPH + H(+). Its pathway is amino-acid biosynthesis; L-isoleucine biosynthesis; L-isoleucine from 2-oxobutanoate: step 2/4. It participates in amino-acid biosynthesis; L-valine biosynthesis; L-valine from pyruvate: step 2/4. In terms of biological role, involved in the biosynthesis of branched-chain amino acids (BCAA). Catalyzes an alkyl-migration followed by a ketol-acid reduction of (S)-2-acetolactate (S2AL) to yield (R)-2,3-dihydroxy-isovalerate. In the isomerase reaction, S2AL is rearranged via a Mg-dependent methyl migration to produce 3-hydroxy-3-methyl-2-ketobutyrate (HMKB). In the reductase reaction, this 2-ketoacid undergoes a metal-dependent reduction by NADPH to yield (R)-2,3-dihydroxy-isovalerate. This is Ketol-acid reductoisomerase (NADP(+)) from Xylella fastidiosa (strain Temecula1 / ATCC 700964).